The following is a 473-amino-acid chain: Keratin, type I cytoskeletal 16 (473 aa).

The interval Met1 to Ser116 is head. The coil 1A stretch occupies residues Glu117–Trp152. The 312-residue stretch at Glu117–Leu428 folds into the IF rod domain. Residues Tyr153–Thr170 form a linker 1 region. Residues Ile171–Leu262 form a coil 1B region. Residues Arg263–Ile285 form a linker 12 region. Residues Leu286 to Glu424 are coil 2. Positions Asp425–Ser473 are tail. Residues Leu428–Ser473 form a disordered region. Low complexity-rich tracts occupy residues Ser429–Ser452 and Gln462–Ser473.

It belongs to the intermediate filament family. In terms of assembly, heterodimer of a type I and a type II keratin. KRT16 associates with KRT6 isomers (KRT6A or KRT6B). Interacts with TCHP. Interacts with TRADD. Expressed in the corneal epithelium (at protein level).

Functionally, epidermis-specific type I keratin that plays a key role in skin. Acts as a regulator of innate immunity in response to skin barrier breach: required for some inflammatory checkpoint for the skin barrier maintenance. This is Keratin, type I cytoskeletal 16 (KRT16) from Homo sapiens (Human).